Here is a 204-residue protein sequence, read N- to C-terminus: Protein C (204 aa).

Positions 1–78 (MPSFLRGILK…TEQSQRRPKI (78 aa)) are disordered. A compositionally biased stretch (basic and acidic residues) spans 10–20 (KPKERHHENKN). Low complexity predominate over residues 25–34 (SSDSLTSSYP).

Belongs to the respirovirus protein C family.

The protein is Protein C (P/V/C) of Homo sapiens (Human).